The chain runs to 216 residues: Ribosomal RNA small subunit methyltransferase G (216 aa).

S-adenosyl-L-methionine is bound by residues glycine 83, methionine 88, 134 to 135 (VE), and arginine 149.

Belongs to the methyltransferase superfamily. RNA methyltransferase RsmG family.

It is found in the cytoplasm. It carries out the reaction guanosine(527) in 16S rRNA + S-adenosyl-L-methionine = N(7)-methylguanosine(527) in 16S rRNA + S-adenosyl-L-homocysteine. In terms of biological role, specifically methylates the N7 position of guanine in position 527 of 16S rRNA. In Pseudomonas putida (strain ATCC 700007 / DSM 6899 / JCM 31910 / BCRC 17059 / LMG 24140 / F1), this protein is Ribosomal RNA small subunit methyltransferase G.